Reading from the N-terminus, the 409-residue chain is Probable ATP-dependent RNA helicase MG308 homolog (409 aa).

Positions 26 to 179 (VFKVWPRQNV…RKQVAPLTVV (154 aa)) constitute a Helicase ATP-binding domain. Residue 39–46 (AETGSGKT) coordinates ATP. The short motif at 126 to 129 (DEVD) is the DEVD box element. Residues 190–349 (LVKHFLLNLN…SVHLERDGTL (160 aa)) form the Helicase C-terminal domain.

The protein belongs to the DEAD box helicase family.

It catalyses the reaction ATP + H2O = ADP + phosphate + H(+). The sequence is that of Probable ATP-dependent RNA helicase MG308 homolog from Mycoplasma pneumoniae (strain ATCC 29342 / M129 / Subtype 1) (Mycoplasmoides pneumoniae).